The primary structure comprises 860 residues: Leucine--tRNA ligase (860 aa).

Positions 42-52 (PYPSGRLHMGH) match the 'HIGH' region motif. The short motif at 619 to 623 (KMSKS) is the 'KMSKS' region element. Lys-622 provides a ligand contact to ATP.

The protein belongs to the class-I aminoacyl-tRNA synthetase family.

Its subcellular location is the cytoplasm. The catalysed reaction is tRNA(Leu) + L-leucine + ATP = L-leucyl-tRNA(Leu) + AMP + diphosphate. This is Leucine--tRNA ligase from Escherichia coli O6:K15:H31 (strain 536 / UPEC).